A 242-amino-acid polypeptide reads, in one-letter code: N-alpha-acetyltransferase 60 (242 aa).

Over 1-192 (MTEVVPSSAL…GGHPPWTILD (192 aa)) the chain is Cytoplasmic. Residues 13-182 (VSLRLLCHDD…DGFTYVLYIN (170 aa)) enclose the N-acetyltransferase domain. Tyr38 serves as a coordination point for substrate. At Lys79 the chain carries N6-acetyllysine; by autocatalysis. Residue Tyr97 is part of the active site. Leu99 is a substrate binding site. An acetyl-CoA-binding site is contributed by 101–103 (LGV). Residues Lys105, Lys109, and Lys121 each carry the N6-acetyllysine; by autocatalysis modification. Position 109–114 (109–114 (KHGIGS)) interacts with acetyl-CoA. His138 is an active-site residue. Residues Asn143 and 150–153 (YENR) contribute to the acetyl-CoA site. Residue Lys156 is modified to N6-acetyllysine; by autocatalysis. Residues 162-173 (PYYYSIRGVLKD) form a required for homodimerization region. Tyr165 lines the substrate pocket. Residues 193–236 (YIQHLGSALASLSPCSIPHRVYRQAHSLLCSFLPWSGISSKSGI) constitute an intramembrane region (helical). Over 237–242 (EYSRTM) the chain is Cytoplasmic.

The protein belongs to the acetyltransferase family. NAA60 subfamily. In terms of assembly, monomer and homodimer; monomer in presence of substrate and homodimer in its absence. In terms of processing, acetylated: autoacetylation is required for optimal acetyltransferase activity.

The protein resides in the golgi apparatus membrane. The enzyme catalyses N-terminal L-methionyl-[transmembrane protein] + acetyl-CoA = N-terminal N(alpha)-acetyl-L-methionyl-[transmembrane protein] + CoA + H(+). It catalyses the reaction L-lysyl-[protein] + acetyl-CoA = N(6)-acetyl-L-lysyl-[protein] + CoA + H(+). N-alpha-acetyltransferase that specifically mediates the acetylation of N-terminal residues of the transmembrane proteins, with a strong preference for N-termini facing the cytosol. Displays N-terminal acetyltransferase activity towards a range of N-terminal sequences including those starting with Met-Lys, Met-Val, Met-Ala and Met-Met. Required for normal chromosomal segregation during anaphase. May also show histone acetyltransferase activity; such results are however unclear in vivo and would require additional experimental evidences. This chain is N-alpha-acetyltransferase 60, found in Homo sapiens (Human).